The primary structure comprises 287 residues: 4-hydroxybenzoate octaprenyltransferase (287 aa).

6 consecutive transmembrane segments (helical) span residues 41 to 61 (LPLLVIFTVGTVLMRSAGCAI), 92 to 112 (VALAAALSLLAFLLILPLNAL), 133 to 153 (FFAIPQAYLGIAFGFGIPMAF), 160 to 180 (VPMLAWVMLLANVFWSVAYDT), 218 to 238 (LGIYVGIGVLLGFGALYWLGW), and 267 to 287 (NNWLGGALFAGIAAHYAATWF).

Belongs to the UbiA prenyltransferase family. Mg(2+) serves as cofactor.

The protein localises to the cell inner membrane. The catalysed reaction is all-trans-octaprenyl diphosphate + 4-hydroxybenzoate = 4-hydroxy-3-(all-trans-octaprenyl)benzoate + diphosphate. Its pathway is cofactor biosynthesis; ubiquinone biosynthesis. Functionally, catalyzes the prenylation of para-hydroxybenzoate (PHB) with an all-trans polyprenyl group. Mediates the second step in the final reaction sequence of ubiquinone-8 (UQ-8) biosynthesis, which is the condensation of the polyisoprenoid side chain with PHB, generating the first membrane-bound Q intermediate 3-octaprenyl-4-hydroxybenzoate. In Paraburkholderia xenovorans (strain LB400), this protein is 4-hydroxybenzoate octaprenyltransferase.